The primary structure comprises 162 residues: UPF0114 protein Sputw3181_3501 (162 aa).

Transmembrane regions (helical) follow at residues 15–35, 53–73, and 136–156; these read IMAPIYLGLSLVLLGLGIKFF, LVLVTLSLIDITLVGGLIVMV, and IMWYLLIHITFVLSAFAMGYL.

It belongs to the UPF0114 family.

The protein localises to the cell membrane. This chain is UPF0114 protein Sputw3181_3501, found in Shewanella sp. (strain W3-18-1).